A 90-amino-acid polypeptide reads, in one-letter code: DNA/RNA-binding protein Alba (90 aa).

The residue at position 8 (Lys-8) is an N6-acetyllysine.

Belongs to the histone-like Alba family. Acetylated. Acetylation at Lys-8 decreases DNA-binding affinity.

Its subcellular location is the cytoplasm. The protein resides in the chromosome. In terms of biological role, binds double-stranded DNA tightly but without sequence specificity. Involved in DNA compaction. The polypeptide is DNA/RNA-binding protein Alba (Nanoarchaeum equitans (strain Kin4-M)).